Reading from the N-terminus, the 131-residue chain is Synaptobrevin-like protein (131 aa).

The Cytoplasmic segment spans residues 1–81 (MLHITTMTDK…KRKFWWKNCK (81 aa)). In terms of domain architecture, v-SNARE coiled-coil homology spans 18 to 78 (RLQQTQAQVN…GKLKRKFWWK (61 aa)). The helical; Anchor for type IV membrane protein transmembrane segment at 82 to 102 (MLAVLGVLVVILIIVLIVWVV) threads the bilayer. At 103 to 131 (SEQKNKVEQSEHSSHHLVMDNSSHLLSEQ) the chain is on the vesicular side. The interval 112-131 (SEHSSHHLVMDNSSHLLSEQ) is disordered. Over residues 122–131 (DNSSHLLSEQ) the composition is skewed to polar residues.

It belongs to the synaptobrevin family.

The protein resides in the cytoplasmic vesicle. It localises to the secretory vesicle. It is found in the synaptic vesicle membrane. Its subcellular location is the synapse. The protein localises to the synaptosome. Unknown, but synaptobrevins are presumed to be involved in targeting and fusion of synaptic vesicles with the presynaptic membrane as well as in neurotransmitter release. This chain is Synaptobrevin-like protein, found in Schistosoma mansoni (Blood fluke).